We begin with the raw amino-acid sequence, 146 residues long: Large ribosomal subunit protein uL13 (146 aa).

It belongs to the universal ribosomal protein uL13 family. Part of the 50S ribosomal subunit.

This protein is one of the early assembly proteins of the 50S ribosomal subunit, although it is not seen to bind rRNA by itself. It is important during the early stages of 50S assembly. The chain is Large ribosomal subunit protein uL13 from Mycoplasma pneumoniae (strain ATCC 29342 / M129 / Subtype 1) (Mycoplasmoides pneumoniae).